Reading from the N-terminus, the 203-residue chain is Glycerol-3-phosphate acyltransferase (203 aa).

5 helical membrane-spanning segments follow: residues 10–30, 60–80, 88–108, 118–138, and 162–182; these read LLLGLTALLAYLLGSVPFGIM, LAAFLTLVLDAGKGAIAVFLA, AAQLAGFAAFLGHCFPVFLGF, LGTLLALAWPIGLAACAIWAI, and FTLGLPSAVVFCAALATLIFL.

The protein belongs to the PlsY family. Probably interacts with PlsX.

Its subcellular location is the cell inner membrane. The catalysed reaction is an acyl phosphate + sn-glycerol 3-phosphate = a 1-acyl-sn-glycero-3-phosphate + phosphate. It functions in the pathway lipid metabolism; phospholipid metabolism. Its function is as follows. Catalyzes the transfer of an acyl group from acyl-phosphate (acyl-PO(4)) to glycerol-3-phosphate (G3P) to form lysophosphatidic acid (LPA). This enzyme utilizes acyl-phosphate as fatty acyl donor, but not acyl-CoA or acyl-ACP. The protein is Glycerol-3-phosphate acyltransferase of Jannaschia sp. (strain CCS1).